The sequence spans 275 residues: MSQKRQTKFQNGKSKTSENSSAKREKGMVVNSKEISDAVGQSKFVLENLRHYTVHPNLAQYYKPLKATALQKFLAQNRKNTSFMLKVTQYDQDKTLLIMTNNPPPCSITQQDKESASKYFSKELLLKVMESHHQHKPTENLWLPRMPQKKKLRSKLKPIFPLILSDDPTSKREQWFRFSTDNDFKSEGKYSKVYALRTQKKMYPQLTFAPVHERDMRKDASKKSASERPISKVIREPLTLASLLEDMPTRTAPGESAFRNGRAPQWIIKKATVIG.

Over residues 1–20 (MSQKRQTKFQNGKSKTSENS) the composition is skewed to polar residues. Residues 1–28 (MSQKRQTKFQNGKSKTSENSSAKREKGM) form a disordered region.

As to expression, testis-specific.

The sequence is that of Testis-specific gene 13 protein (TSGA13) from Homo sapiens (Human).